The following is a 661-amino-acid chain: Heme transporter BhuA (661 aa).

A signal peptide spans 1 to 23 (MKFTRTLVLVSTSLLATVATSQA). The region spanning 48–159 (KDNIEATGGT…AAGAIRYETV (112 aa)) is the TBDR plug domain. One can recognise a TBDR beta-barrel domain in the interval 170 to 661 (TFGARIIGSY…TFTFQTAFKF (492 aa)).

Belongs to the TonB-dependent receptor family.

The protein resides in the cell outer membrane. Functionally, heme transporter playing an important role in stationary-phase iron acquisition and required for maintenance of chronic infection in mice. The polypeptide is Heme transporter BhuA (bhuA) (Brucella abortus (strain 2308)).